Consider the following 406-residue polypeptide: 3-oxoacyl-[acyl-carrier-protein] synthase 1 (406 aa).

Positions 1 to 403 (MKRAVITGLG…GTNATLVMRK (403 aa)) constitute a Ketosynthase family 3 (KS3) domain. Active-site for beta-ketoacyl synthase activity residues include C163, H298, and H333.

It belongs to the thiolase-like superfamily. Beta-ketoacyl-ACP synthases family. As to quaternary structure, homodimer.

The protein resides in the cytoplasm. The enzyme catalyses a fatty acyl-[ACP] + malonyl-[ACP] + H(+) = a 3-oxoacyl-[ACP] + holo-[ACP] + CO2. It carries out the reaction (3Z)-decenoyl-[ACP] + malonyl-[ACP] + H(+) = 3-oxo-(5Z)-dodecenoyl-[ACP] + holo-[ACP] + CO2. It participates in lipid metabolism; fatty acid biosynthesis. In terms of biological role, involved in the type II fatty acid elongation cycle. Catalyzes the elongation of a wide range of acyl-ACP by the addition of two carbons from malonyl-ACP to an acyl acceptor. Can also use unsaturated fatty acids. Catalyzes a key reaction in unsaturated fatty acid (UFA) synthesis, the elongation of the cis-3-decenoyl-ACP produced by FabA. This Escherichia coli O6:H1 (strain CFT073 / ATCC 700928 / UPEC) protein is 3-oxoacyl-[acyl-carrier-protein] synthase 1 (fabB).